We begin with the raw amino-acid sequence, 506 residues long: UDP-N-acetylglucosamine--peptide N-acetylglucosaminyltransferase GtfA subunit (506 aa).

Residues 1–78 form an N-terminus R-fold-1 region; it reads MTVYNINLGI…FTDIKIAPTT (78 aa). Position 16 to 19 (16 to 19) interacts with UDP; it reads GVEY. The segment at 79 to 195 is extended beta-sheet domain; the sequence is VTLDQVLAQV…LYRFPDRIFY (117 aa). Residues 196 to 306 are C-terminus R-fold-1; the sequence is SKAELVRYFL…QPQIATIPVG (111 aa). Residue His-242 coordinates N-acetyl-D-glucosamine. The segment at 307 to 506 is R-fold-2; sequence SLDQLTYPKE…LKEVRDDSAL (200 aa). UDP-binding positions include Arg-328, Tyr-357, and 383 to 385; that span reads GHA. 405-407 is an N-acetyl-D-glucosamine binding site; the sequence is GFG. Position 409 (Thr-409) interacts with UDP.

This sequence belongs to the glycosyltransferase group 1 family. Glycosyltransferase 4 subfamily. Forms a heterotetramer with 2 subunits each of GtfA and GtfB. Part of the accessory SecA2/SecY2 protein translocation apparatus required to export cell wall protein GspB.

It localises to the cytoplasm. The protein resides in the cell membrane. It carries out the reaction L-seryl-[protein] + UDP-N-acetyl-alpha-D-glucosamine = 3-O-[N-acetyl-alpha-D-glucosaminyl]-L-seryl-[protein] + UDP + H(+). It participates in protein modification; protein glycosylation. Functionally, required for polymorphic O-glycosylation of GspB, a serine-rich repeat cell wall protein encoded upstream in the same operon. Catalyzes the first step in glycosylation by transferring N-acetylglucosamine from UDP-GlcNAc to serine residues in GspB. Part of the accessory SecA2/SecY2 system specifically required to export GspB. Upon coexpression in E.coli with GtfB glycosylates GspB constructs. Glycosylation probably occurs intracellularly. Requires GtfB for glycosylation activity, it has no activity alone. Does not use UDP-glucose as substrate. Has a fast, probably processive glycosylation phase followed by a slower, non-processive phase. The enzyme probably modifies its tertiary conformation by opening and closing its intersubunit interfaces to accomodate the increasingly glycosylated substrate; protein substrate recognition is provided by GtfB. The polypeptide is UDP-N-acetylglucosamine--peptide N-acetylglucosaminyltransferase GtfA subunit (Streptococcus gordonii).